A 178-amino-acid chain; its full sequence is Methyltransferase flvH (178 aa).

Positions 120-136 (QPFNCFCGSQNCLGLIA) constitute a Post-SET domain. Residues Cys124, Cys126, and Cys131 each contribute to the Zn(2+) site.

Belongs to the class V-like SAM-binding methyltransferase superfamily.

It catalyses the reaction L-lysine + 2 S-adenosyl-L-methionine = N(6),N(6)-dimethyl-L-lysine + 2 S-adenosyl-L-homocysteine + 2 H(+). The protein operates within secondary metabolite biosynthesis; terpenoid biosynthesis. In terms of biological role, methyltransferase; part of the gene cluster that mediates the biosynthesis of flavunoidine, an alkaloidal terpenoid with a tetracyclic cage-like core connected to dimethylcadaverine via a C-N bond and acylated with 5,5-dimethyl-L-pipecolate. The tetracyclic core is synthesized by the terpene cyclase flvE and the cytochrome P450 monooxygenase flvD. The terpene cyclase flvE catalyzes the cyclization of farnesyl pyrophosphate (FPP) to form (1R,4R,5S)-(+)-acoradiene and the cytochrome P450 monooxygenase flvD is then responsible for oxidative conversion of (1R,4R,5S)-(+)-acoradiene into the tetracyclic cage present in the final product flavunoidine. In parallel, the N-methyltransferase flvH dimethylates L-lysine to give N,N-dimethyl-L-Lysin which is decarboxylated by flvG to afford dimethylcadaverine. The terpene cyclase-like protein flvF is the enzyme that attaches the dimethylcadaverine precusor at the C-7 of the tetracyclic cage to yield pre-flavunoidine. The cytochrome monooxygenase flvC hydroxylates the C-10 position of pre-flavunoidine whereas the NRPS flvI acylates the terpenoid core at the hydroxylated C-10 with dimethylpipecolate to yield final flavunoidine. The bifunctional enzyme flvA and the dehydrogenase flvB are responsible for the synthesis of the dimethylpipecolate precursor. The PLP-dependent lyase domain of flvA might use L-O-acetyl-homoserine and alpha-keto-isovalerate to form an intermediary ketone that can cyclize intramolecularly to yield an imine. The imine can be reduced by flvB to yield the 6-carboxylated pipecolate. The C-terminal alpha-KG-dependent oxygenase domain of flvA is then proposed to catalyze the decarboxylation to yield dimethylpipecolate. The chain is Methyltransferase flvH from Aspergillus flavus (strain ATCC 200026 / FGSC A1120 / IAM 13836 / NRRL 3357 / JCM 12722 / SRRC 167).